The sequence spans 144 residues: Prefoldin subunit alpha (144 aa).

Belongs to the prefoldin alpha subunit family. Heterohexamer of two alpha and four beta subunits.

It localises to the cytoplasm. Functionally, molecular chaperone capable of stabilizing a range of proteins. Seems to fulfill an ATP-independent, HSP70-like function in archaeal de novo protein folding. This Methanococcus maripaludis (strain C7 / ATCC BAA-1331) protein is Prefoldin subunit alpha.